The primary structure comprises 260 residues: Proliferating cell nuclear antigen (260 aa).

Residues 61-80 (RCDRNLSMGMNLGSMAKILK) mediate DNA binding.

This sequence belongs to the PCNA family. As to quaternary structure, homotrimer. Forms a complex with activator 1 heteropentamer in the presence of ATP. Interacts with E2f. Interacts with the catalytic subunits of two DNA polymerase complexes: PolD1 from the delta complex and PolE1/DNApol-epsilon255 from the epsilon complex. Expressed at high levels in adult ovary.

The protein resides in the nucleus. The protein localises to the chromosome. It localises to the cytoplasm. In terms of biological role, likely to be an auxiliary protein of DNA polymerase delta complex and is probably involved in the control of DNA replication and repair by increasing the polymerase's processibility. The sequence is that of Proliferating cell nuclear antigen from Drosophila melanogaster (Fruit fly).